The primary structure comprises 698 residues: Zinc finger CCCH domain-containing protein 7 (698 aa).

A compositionally biased stretch (pro residues) spans 1-11 (MEEPSPVPPAA). Disordered stretches follow at residues 1 to 23 (MEEP…PPTT), 56 to 95 (HAAR…GGDR), 109 to 137 (APHE…PQGT), and 272 to 300 (GSLD…SGNS). Low complexity-rich tracts occupy residues 12–21 (APASLAAAPP) and 65–74 (EPAAAAAIPP). The span at 281 to 300 (EEGEIEGDTQNLDADDSGNS) shows a compositional bias: acidic residues. C3H1-type zinc fingers lie at residues 429–456 (PKVV…HDTT), 458–485 (LTKS…HELS), and 486–511 (KYPC…HVIP). 2 disordered regions span residues 512-553 (TAEG…GEPA) and 607-682 (TEKH…QHEV). 2 stretches are compositionally biased toward polar residues: residues 535 to 548 (CQEQ…STVY) and 665 to 680 (SLPT…STQH).

The chain is Zinc finger CCCH domain-containing protein 7 from Oryza sativa subsp. japonica (Rice).